We begin with the raw amino-acid sequence, 241 residues long: LexA repressor (241 aa).

The H-T-H motif DNA-binding region spans 41–61 (FREIGNAAGLKSPSSVKHQLQ). Active-site for autocatalytic cleavage activity residues include Ser165 and Lys202.

It belongs to the peptidase S24 family. Homodimer.

The enzyme catalyses Hydrolysis of Ala-|-Gly bond in repressor LexA.. Its function is as follows. Represses a number of genes involved in the response to DNA damage (SOS response), including recA and lexA. In the presence of single-stranded DNA, RecA interacts with LexA causing an autocatalytic cleavage which disrupts the DNA-binding part of LexA, leading to derepression of the SOS regulon and eventually DNA repair. The chain is LexA repressor from Bifidobacterium longum subsp. infantis (strain ATCC 15697 / DSM 20088 / JCM 1222 / NCTC 11817 / S12).